We begin with the raw amino-acid sequence, 440 residues long: Thymidine phosphorylase (440 aa).

Belongs to the thymidine/pyrimidine-nucleoside phosphorylase family. In terms of assembly, homodimer.

It catalyses the reaction thymidine + phosphate = 2-deoxy-alpha-D-ribose 1-phosphate + thymine. It functions in the pathway pyrimidine metabolism; dTMP biosynthesis via salvage pathway; dTMP from thymine: step 1/2. Its function is as follows. The enzymes which catalyze the reversible phosphorolysis of pyrimidine nucleosides are involved in the degradation of these compounds and in their utilization as carbon and energy sources, or in the rescue of pyrimidine bases for nucleotide synthesis. This is Thymidine phosphorylase from Escherichia coli O139:H28 (strain E24377A / ETEC).